The primary structure comprises 579 residues: Carotenoid-cleaving dioxygenase, mitochondrial (579 aa).

Fe cation-binding residues include His-226, His-286, His-357, and His-573.

The protein belongs to the carotenoid oxygenase family. Fe(2+) serves as cofactor. As to expression, highly expressed in retinal pigment epithelium. Also expressed in stomach, small intestine, liver, testis, kidney, adrenal gland, pancreas, heart, skeletal muscle and prostate (at protein level).

It is found in the mitochondrion. The enzyme catalyses all-trans-beta-carotene + O2 = beta-ionone + all-trans-10'-apo-beta-carotenal. The catalysed reaction is 5-cis-lycopene + O2 = 5-cis-10'-apo-lycopenal + (3E,5E)-6,10-dimethylundeca-3,5,9-trien-2-one. It carries out the reaction 13-cis-lycopene + O2 = 13-cis-10'-apo-lycopenal + (3E,5E)-6,10-dimethylundeca-3,5,9-trien-2-one. It catalyses the reaction lutein + O2 = (3R,6R)-hydroxy-alpha-ionone + (3R)-3-hydroxy-10'-apo-beta-carotenal. The enzyme catalyses lutein + O2 = (3R,6R)-3-hydroxy-10'-apo-alpha-carotenal + (3R)-hydroxy-beta-ionone. The catalysed reaction is all-trans-zeaxanthin + 2 O2 = 4,9-dimethyldodeca-2,4,6,8,10-pentaenedial + 2 (3R)-hydroxy-beta-ionone. It carries out the reaction all-trans-zeaxanthin + O2 = (3R)-3-hydroxy-10'-apo-beta-carotenal + (3R)-hydroxy-beta-ionone. It catalyses the reaction beta-cryptoxanthin + O2 = all-trans-10'-apo-beta-carotenal + (3R)-hydroxy-beta-ionone. The enzyme catalyses all-trans-10'-apo-beta-carotenal + O2 = beta-ionone + 4,9-dimethyldodeca-2,4,6,8,10-pentaenedial. The catalysed reaction is (3R)-3-hydroxy-10'-apo-beta-carotenal + O2 = 4,9-dimethyldodeca-2,4,6,8,10-pentaenedial + (3R)-hydroxy-beta-ionone. It carries out the reaction (3R,6R)-3-hydroxy-10'-apo-alpha-carotenal + O2 = (3R,6R)-hydroxy-alpha-ionone + 4,9-dimethyldodeca-2,4,6,8,10-pentaenedial. Its function is as follows. Broad specificity mitochondrial dioxygenase that mediates the asymmetric oxidative cleavage of carotenoids. Cleaves carotenes (pure hydrocarbon carotenoids) such as all-trans-beta-carotene and lycopene as well as xanthophylls (oxygenated carotenoids) such as zeaxanthin, lutein and beta-cryptoxanthin at both the 9,10 and the 9',10' carbon-carbon double bond. Through its function in carotenoids metabolism regulates oxidative stress and the production of important signaling molecules. The protein is Carotenoid-cleaving dioxygenase, mitochondrial of Homo sapiens (Human).